The following is a 37-amino-acid chain: Large ribosomal subunit protein bL36 (37 aa).

The protein belongs to the bacterial ribosomal protein bL36 family.

The protein is Large ribosomal subunit protein bL36 of Acidithiobacillus ferrooxidans (strain ATCC 23270 / DSM 14882 / CIP 104768 / NCIMB 8455) (Ferrobacillus ferrooxidans (strain ATCC 23270)).